A 385-amino-acid chain; its full sequence is Deoxyguanosinetriphosphate triphosphohydrolase-like protein (385 aa).

The span at 1-14 (MTEGVEGRSQERSD) shows a compositional bias: basic and acidic residues. The disordered stretch occupies residues 1–23 (MTEGVEGRSQERSDLAGFAARSA). An HD domain is found at 75–204 (RLTHSLEVAQ…INYADEIAYN (130 aa)).

This sequence belongs to the dGTPase family. Type 2 subfamily.

This Geobacter metallireducens (strain ATCC 53774 / DSM 7210 / GS-15) protein is Deoxyguanosinetriphosphate triphosphohydrolase-like protein.